Reading from the N-terminus, the 148-residue chain is uncharacterized protein (148 aa).

Low complexity predominate over residues 1–17 (MCPPVRQRPAQAPPAKR). Disordered regions lie at residues 1–86 (MCPP…VQSP) and 122–148 (RAHR…TSPC). The segment covering 38–57 (RPPKMQRRPRPPVAKRRRFP) has biased composition (basic residues). Polar residues predominate over residues 137 to 148 (QRPSPDSQTSPC).

Belongs to the Epstein-Barr virus BLLF2 family.

This is an uncharacterized protein from Epstein-Barr virus (strain AG876) (HHV-4).